Consider the following 787-residue polypeptide: Protein PAT1 homolog 2 (787 aa).

Disordered regions lie at residues 94–120, 134–221, 338–374, 411–445, and 765–787; these read KHLG…WTQD, EQVQ…NASP, VREH…GLQF, LAKK…QQPQ, and VSES…FVRG. The span at 105–120 shows a compositional bias: polar residues; that stretch reads GSFSRESSTATDWTQD. The segment covering 142-153 has biased composition (low complexity); the sequence is SSQPQSSPNSNS. Polar residues-rich tracts occupy residues 154-171, 180-198, and 208-221; these read LYRT…QHYS, STFT…SSPS, and GGSQ…NASP. 2 positions are modified to phosphoserine: S184 and S192. The span at 341 to 353 shows a compositional bias: basic residues; that stretch reads HKHKSSHRSRKNR. Composition is skewed to polar residues over residues 355 to 373 and 436 to 445; these read GISQ…SGLQ and SRNSSDQQPQ.

Functionally, activator of mRNA decapping. Involved in mRNA decay via decapping. This chain is Protein PAT1 homolog 2, found in Arabidopsis thaliana (Mouse-ear cress).